The following is a 510-amino-acid chain: 2-isopropylmalate synthase (510 aa).

The Pyruvate carboxyltransferase domain occupies 4–266 (IQVFDTTLRD…ETNLKLDETK (263 aa)). Mn(2+)-binding residues include aspartate 13, histidine 201, histidine 203, and asparagine 237. A regulatory domain region spans residues 390 to 510 (QVETLQLQFV…DTARKDGVVS (121 aa)).

It belongs to the alpha-IPM synthase/homocitrate synthase family. LeuA type 1 subfamily. As to quaternary structure, homodimer. Requires Mn(2+) as cofactor.

It localises to the cytoplasm. The enzyme catalyses 3-methyl-2-oxobutanoate + acetyl-CoA + H2O = (2S)-2-isopropylmalate + CoA + H(+). The protein operates within amino-acid biosynthesis; L-leucine biosynthesis; L-leucine from 3-methyl-2-oxobutanoate: step 1/4. In terms of biological role, catalyzes the condensation of the acetyl group of acetyl-CoA with 3-methyl-2-oxobutanoate (2-ketoisovalerate) to form 3-carboxy-3-hydroxy-4-methylpentanoate (2-isopropylmalate). This is 2-isopropylmalate synthase from Staphylococcus carnosus (strain TM300).